Here is a 438-residue protein sequence, read N- to C-terminus: Xylose isomerase (438 aa).

Residues H100 and D103 contribute to the active site. Positions 231, 267, 270, 295, 306, 308, and 338 each coordinate Mg(2+).

It belongs to the xylose isomerase family. As to quaternary structure, homotetramer. The cofactor is Mg(2+).

Its subcellular location is the cytoplasm. It carries out the reaction alpha-D-xylose = alpha-D-xylulofuranose. This chain is Xylose isomerase, found in Caldanaerobacter subterraneus subsp. yonseiensis (Thermoanaerobacter yonseiensis).